A 229-amino-acid chain; its full sequence is UPF0488 protein C8orf33 homolog (229 aa).

Ala-2 is subject to N-acetylalanine. Arg-27 carries the post-translational modification Omega-N-methylarginine. The tract at residues 55–101 (SRAHPLGDEGGTASKKQNKKKKTRNRASVANGGEKASEKLAPEEVPL) is disordered. The segment covering 70 to 79 (KQNKKKKTRN) has biased composition (basic residues). At Ser-82 the chain carries Phosphoserine.

It belongs to the UPF0488 family.

This Pongo abelii (Sumatran orangutan) protein is UPF0488 protein C8orf33 homolog.